Reading from the N-terminus, the 147-residue chain is D(1B) dopamine receptor (147 aa).

Residues 1–12 (SILISFPVQLNW) form a helical membrane-spanning segment. Topologically, residues 13–55 (HRDQAGSWGGLDLTNNLANWTPWEEDVWEPDVRAENCDSSLNR) are extracellular. Asn-54 is a glycosylation site (N-linked (GlcNAc...) asparagine). The chain crosses the membrane as a helical span at residues 56 to 78 (TYAISSSLVSFYIPVAIMIVTYT). The Cytoplasmic portion of the chain corresponds to 79-128 (RIYRIAQVQIRRISSLERAAEHAQSCRSSAACAPDTSLRASIKKETKVLK). The chain crosses the membrane as a helical span at residues 129–147 (TLSVIMGVFVCCWLPFFIL).

The protein belongs to the G-protein coupled receptor 1 family.

It is found in the cell membrane. Dopamine receptor whose activity is mediated by G proteins which activate adenylyl cyclase. The chain is D(1B) dopamine receptor (DRD5) from Macaca mulatta (Rhesus macaque).